The primary structure comprises 171 residues: Plastocyanin minor isoform, chloroplastic (171 aa).

Positions 73-171 (MEVLLGSDDG…AGMVGKLTVK (99 aa)) constitute a Plastocyanin-like domain. His-109, Cys-156, His-159, and Met-164 together coordinate Cu cation.

Belongs to the plastocyanin family. The cofactor is Cu(2+).

It is found in the plastid. The protein localises to the chloroplast thylakoid membrane. Functionally, participates in electron transfer between P700 and the cytochrome b6-f complex in photosystem I. Seems to be a minor plastocyanin in Arabidopsis. In Arabidopsis thaliana (Mouse-ear cress), this protein is Plastocyanin minor isoform, chloroplastic (PETE).